The sequence spans 234 residues: Glycerol uptake facilitator protein (234 aa).

The next 6 membrane-spanning stretches (helical) occupy residues 9–29 (FLGT…VVLP), 37–57 (GWIV…FVSG), 61–81 (PAHL…LPWA), 83–103 (VLPY…LVWL), 135–155 (LISE…LGLY), and 159–179 (AGIG…SLGG). An NPA 1 motif is present at residues 65 to 67 (NPA). The short motif at 186 to 188 (NPA) is the NPA 2 element. The helical transmembrane segment at 214-234 (WIPVVGPVIGAALAVLVFSLF) threads the bilayer.

The protein belongs to the MIP/aquaporin (TC 1.A.8) family.

It localises to the cell membrane. The enzyme catalyses glycerol(in) = glycerol(out). Its function is as follows. Mediates glycerol diffusion across the cytoplasmic membrane via a pore-type mechanism. The polypeptide is Glycerol uptake facilitator protein (glpF) (Streptococcus pneumoniae (strain ATCC BAA-255 / R6)).